The chain runs to 349 residues: B3 domain-containing protein At5g24050 (349 aa).

The segment at residues Phe240–Ser341 is a DNA-binding region (TF-B3).

The protein localises to the nucleus. This is B3 domain-containing protein At5g24050 from Arabidopsis thaliana (Mouse-ear cress).